The sequence spans 142 residues: Hemoglobin subunit pi (142 aa).

A Globin domain is found at 2-142 (TLTQAEKAAV…VSSVLTEKYR (141 aa)). Residues H59 and H88 each coordinate heme b.

It belongs to the globin family.

The pi' chain is the counterpart of the alpha chain in the major early embryonic hemoglobin P. The protein is Hemoglobin subunit pi of Cairina moschata (Muscovy duck).